A 286-amino-acid polypeptide reads, in one-letter code: Putative transcription factor kapC (286 aa).

The span at 1-10 (MQPALAPAPH) shows a compositional bias: pro residues. The tract at residues 1–120 (MQPALAPAPH…QNRAAQRAFR (120 aa)) is disordered. Low complexity predominate over residues 26-40 (HDQLLAAHQHLSHPQ). A compositionally biased stretch (pro residues) spans 41–54 (QPRPQAPATQPPHM). The span at 55–67 (QPNTASPRDQNNI) shows a compositional bias: polar residues. Pro residues predominate over residues 81–92 (PQTPPQPEPAPQ). A bZIP domain is found at 102 to 165 (PLSTSKRAAQ…EYIINLQTRL (64 aa)). Positions 103–126 (LSTSKRAAQNRAAQRAFRQRKESY) are basic motif. Over residues 108-118 (RAAQNRAAQRA) the composition is skewed to low complexity. Residues 130–161 (LEEQVKHQEAITEEYKALHAENYQLREYIINL) form a leucine-zipper region. The disordered stretch occupies residues 197–286 (RGNAASAGPA…QEPDGLPVVS (90 aa)). Positions 198-222 (GNAASAGPAPAGPGPQQSQPNQNQG) are enriched in low complexity.

Belongs to the bZIP family.

The protein localises to the nucleus. Its function is as follows. Putative transcription factor. This is Putative transcription factor kapC (kapC) from Aspergillus terreus (strain NIH 2624 / FGSC A1156).